The sequence spans 215 residues: SAGA complex/transcription factor TFIID complex subunit Taf10 (215 aa).

The interval 1 to 77 (MSDINNNEPA…SRERHGSNYV (77 aa)) is disordered. A compositionally biased stretch (polar residues) spans 23-42 (GNNSMSVDEQPETSSTNLPT). Over residues 58–73 (NNEDSPKSDDSRERHG) the composition is skewed to basic and acidic residues. A Histone-fold domain is found at 58–203 (NNEDSPKSDD…VDDLSAALNE (146 aa)).

It belongs to the TAF10 family. In terms of assembly, component of the 1.8 MDa SAGA (Spt-Ada-Gcn5 acetyltransferase) complex, which is composed of 19 subunits tra1, spt7, taf5, ngg1/ada3, sgf73, spt20, spt8, taf12, taf6, hfi1/ada1, ubp8, gcn5, ada2, spt3, sgf29, taf10, taf9, sgf11 and sus1. The SAGA complex is composed of 4 modules, namely the HAT (histone acetyltransferase) module (gcn5, ada2, ngg1/ada3 and sgf29), the DUB (deubiquitinating) module (ubp8, sgf11, sgf73 and sus1), the core or TAF (TBP-associated factor) module (taf5, taf6, taf9, taf10 and taf12), and the Tra1 or SPT (Suppressor of Ty) module (tra1, hfi1/ada1, spt3, spt7, spt8 and spt20). The Tra1/SPT module binds activators, the core module recruits TBP (TATA-binding protein), the HAT module contains the histone H3 acetyltransferase gcn5, and the DUB module comprises the histone H2B deubiquitinase ubp8. Component of the 1.2 MDa TFIID complex, which is composed of TATA-binding protein (TBP) and the 14 TBP-associated factors (TAFs). It comprises 1 copy of each taf1, taf2, taf3, taf7, taf8, taf11, taf13, 2 copies of each taf4, taf5, taf6, taf9, taf10, taf12, and 3 copies of taf14. In TFIID, taf10 heterodimerizes with taf3 and taf8.

Its subcellular location is the nucleus. Functionally, functions as a component of both the DNA-binding general transcription initiation factor complex TFIID and the transcription coactivator SAGA complex. Binding of TFIID to a promoter (with or without TATA element) is the initial step in pre-initiation complex (PIC) formation. TFIID plays a key role in the regulation of gene expression by RNA polymerase II through different activities such as transcription activator interaction, core promoter recognition and selectivity, TFIIA and TFIIB interaction, chromatin modification (histone acetylation by TAF1), facilitation of DNA opening and initiation of transcription. SAGA acts as a general cofactor required for essentially all RNA polymerase II transcription. At the promoters, SAGA is required for transcription pre-initiation complex (PIC) recruitment. It influences RNA polymerase II transcriptional activity through different activities such as TBP interaction (via core/TAF module) and promoter selectivity, interaction with transcription activators (via Tra1/SPT module), and chromatin modification through histone acetylation (via HAT module) and deubiquitination (via DUB module). SAGA preferentially acetylates histones H3 (to form H3K9ac, H3K14ac, H3K18ac and H3K23ac) and H2B and deubiquitinates histone H2B. SAGA interacts with DNA via upstream activating sequences (UASs). The chain is SAGA complex/transcription factor TFIID complex subunit Taf10 from Schizosaccharomyces pombe (strain 972 / ATCC 24843) (Fission yeast).